Consider the following 73-residue polypeptide: Structural DNA-binding protein p10 (73 aa).

A disordered region spans residues 1 to 35; that stretch reads MPTKAGTKSTAHKKTTTKGPSKSPKGKTHATALHQ.

The protein belongs to the asfivirus P10 family.

It is found in the virion. May play a role in genome packaging through direct interaction with viral DNA. Binds to ssDNA and dsDNA with the same apparent affinity in vitro. The protein is Structural DNA-binding protein p10 of African swine fever virus (isolate Tick/Malawi/Lil 20-1/1983) (ASFV).